Here is an 883-residue protein sequence, read N- to C-terminus: Sodium/sulfate cotransporter 2 (883 aa).

6 consecutive transmembrane segments (helical) span residues Phe-3–Ala-23, Val-30–Ala-50, Gly-60–Leu-80, Met-106–Ile-126, Leu-139–Ser-159, and Ile-185–Leu-205. 4 RCK C-terminal domains span residues Leu-211–Leu-295, Val-317–Asn-401, Val-406–Leu-491, and Glu-497–Phe-583. The next 6 membrane-spanning stretches (helical) occupy residues Met-600–Lys-620, Tyr-624–Met-644, Val-657–Ala-677, Ser-693–Thr-713, Phe-774–Cys-794, and Val-802–Leu-822. Residues Gln-857–Ala-883 form a disordered region. A compositionally biased stretch (low complexity) spans Thr-861–Ser-871.

It belongs to the divalent anion:Na+ symporter (DASS) superfamily. Na+/sulfate symporter (TC 2.A.47.4) family.

The protein resides in the cell membrane. In terms of biological role, na(+)/sulfate cotransporter with a probable high-affinity for sulfate and a proteasome dependent turnover. This is Sodium/sulfate cotransporter 2 (SLT2) from Chlamydomonas reinhardtii (Chlamydomonas smithii).